We begin with the raw amino-acid sequence, 193 residues long: Peptidyl-tRNA hydrolase (193 aa).

Tyr-14 is a tRNA binding site. The Proton acceptor role is filled by His-19. The tRNA site is built by Phe-64, Asn-66, and Asn-112.

Belongs to the PTH family. Monomer.

Its subcellular location is the cytoplasm. It catalyses the reaction an N-acyl-L-alpha-aminoacyl-tRNA + H2O = an N-acyl-L-amino acid + a tRNA + H(+). In terms of biological role, hydrolyzes ribosome-free peptidyl-tRNAs (with 1 or more amino acids incorporated), which drop off the ribosome during protein synthesis, or as a result of ribosome stalling. Functionally, catalyzes the release of premature peptidyl moieties from peptidyl-tRNA molecules trapped in stalled 50S ribosomal subunits, and thus maintains levels of free tRNAs and 50S ribosomes. The chain is Peptidyl-tRNA hydrolase from Bartonella henselae (strain ATCC 49882 / DSM 28221 / CCUG 30454 / Houston 1) (Rochalimaea henselae).